Consider the following 118-residue polypeptide: Putative pterin-4-alpha-carbinolamine dehydratase (118 aa).

This sequence belongs to the pterin-4-alpha-carbinolamine dehydratase family.

It catalyses the reaction (4aS,6R)-4a-hydroxy-L-erythro-5,6,7,8-tetrahydrobiopterin = (6R)-L-erythro-6,7-dihydrobiopterin + H2O. This is Putative pterin-4-alpha-carbinolamine dehydratase from Xanthomonas campestris pv. campestris (strain 8004).